Consider the following 246-residue polypeptide: 4-hydroxy-tetrahydrodipicolinate reductase (246 aa).

Residues 8-13 (GISGRM), 75-77 (GTT), and 99-102 (ASNY) contribute to the NAD(+) site. Catalysis depends on His-132, which acts as the Proton donor/acceptor. His-133 is a (S)-2,3,4,5-tetrahydrodipicolinate binding site. Catalysis depends on Lys-136, which acts as the Proton donor. 142–143 (GT) provides a ligand contact to (S)-2,3,4,5-tetrahydrodipicolinate.

The protein belongs to the DapB family.

Its subcellular location is the cytoplasm. The enzyme catalyses (S)-2,3,4,5-tetrahydrodipicolinate + NAD(+) + H2O = (2S,4S)-4-hydroxy-2,3,4,5-tetrahydrodipicolinate + NADH + H(+). It carries out the reaction (S)-2,3,4,5-tetrahydrodipicolinate + NADP(+) + H2O = (2S,4S)-4-hydroxy-2,3,4,5-tetrahydrodipicolinate + NADPH + H(+). It participates in amino-acid biosynthesis; L-lysine biosynthesis via DAP pathway; (S)-tetrahydrodipicolinate from L-aspartate: step 4/4. Its function is as follows. Catalyzes the conversion of 4-hydroxy-tetrahydrodipicolinate (HTPA) to tetrahydrodipicolinate. The protein is 4-hydroxy-tetrahydrodipicolinate reductase of Akkermansia muciniphila (strain ATCC BAA-835 / DSM 22959 / JCM 33894 / BCRC 81048 / CCUG 64013 / CIP 107961 / Muc).